Consider the following 284-residue polypeptide: Nucleotide-binding protein Sbal223_0704 (284 aa).

Residue 8-15 (GRSGSGKS) coordinates ATP. 56 to 59 (DVRN) contacts GTP.

Belongs to the RapZ-like family.

Functionally, displays ATPase and GTPase activities. The chain is Nucleotide-binding protein Sbal223_0704 from Shewanella baltica (strain OS223).